Reading from the N-terminus, the 359-residue chain is Replication-associated protein (359 aa).

Positions 8-116 (QINAKHYFLT…DGDVLEWGTF (109 aa)) constitute a CRESS-DNA virus Rep endonuclease domain. Positions 15–18 (FLTF) match the RCR-1 motif. The a divalent metal cation site is built by Glu-49, His-57, and His-59. The RCR-2 motif lies at 57 to 59 (HLH). Tyr-103 serves as the catalytic For DNA cleavage activity. Residues 103–106 (YIDK) carry the RCR-3 motif. A divalent metal cation is bound at residue Asp-107. The interval 143 to 153 (KSEALDVIKEL) is binding to RBR1. The tract at residues 156-176 (RDYILHFHNINSNLNMVFQVP) is oligomerization. 221–228 (GDSRTGKT) is an ATP binding site.

It belongs to the geminiviridae Rep protein family. Homooligomer. Interacts with the replication enhancer protein (REn). Interacts with host retinoblastoma-related protein 1 (RBR1), and may thereby induce the transcription of host replicative enzymes even if the cell is not dividing anymore. Interacts with host PCNA. Interacts with host SCE1 protein. Mg(2+) is required as a cofactor. Mn(2+) serves as cofactor.

It is found in the host nucleus. In terms of biological role, essential for the replication of viral ssDNA. The closed circular ssDNA genome is first converted to a superhelical dsDNA. Rep binds a specific region at the genome origin of replication. It introduces an endonucleolytic nick within the conserved sequence 5'-TAATATTAC-3' in the intergenic region of the genome present in all geminiviruses, thereby initiating the rolling circle replication (RCR). Following cleavage, binds covalently to the 5'-phosphate of DNA as a tyrosyl ester. The cleavage gives rise to a free 3'-OH that serves as a primer for the cellular DNA polymerase. The polymerase synthesizes the (+) strand DNA by rolling circle mechanism. After one round of replication, a Rep-catalyzed nucleotidyl transfer reaction releases a circular single-stranded virus genome, thereby terminating the replication. Displays origin-specific DNA cleavage, nucleotidyl transferase, ATPase and helicase activities. This is Replication-associated protein from Solanum lycopersicum (Tomato).